The chain runs to 157 residues: 2-C-methyl-D-erythritol 2,4-cyclodiphosphate synthase (157 aa).

A divalent metal cation contacts are provided by Asp-8 and His-10. 4-CDP-2-C-methyl-D-erythritol 2-phosphate contacts are provided by residues 8–10 (DVH) and 34–35 (HS). An a divalent metal cation-binding site is contributed by His-42. 4-CDP-2-C-methyl-D-erythritol 2-phosphate-binding positions include 56-58 (DIG), 132-135 (TTNE), and Arg-142.

Belongs to the IspF family. In terms of assembly, homotrimer. A divalent metal cation is required as a cofactor.

It catalyses the reaction 4-CDP-2-C-methyl-D-erythritol 2-phosphate = 2-C-methyl-D-erythritol 2,4-cyclic diphosphate + CMP. It functions in the pathway isoprenoid biosynthesis; isopentenyl diphosphate biosynthesis via DXP pathway; isopentenyl diphosphate from 1-deoxy-D-xylulose 5-phosphate: step 4/6. In terms of biological role, involved in the biosynthesis of isopentenyl diphosphate (IPP) and dimethylallyl diphosphate (DMAPP), two major building blocks of isoprenoid compounds. Catalyzes the conversion of 4-diphosphocytidyl-2-C-methyl-D-erythritol 2-phosphate (CDP-ME2P) to 2-C-methyl-D-erythritol 2,4-cyclodiphosphate (ME-CPP) with a corresponding release of cytidine 5-monophosphate (CMP). This chain is 2-C-methyl-D-erythritol 2,4-cyclodiphosphate synthase, found in Chlorobaculum parvum (strain DSM 263 / NCIMB 8327) (Chlorobium vibrioforme subsp. thiosulfatophilum).